The chain runs to 291 residues: Phosphatidylserine decarboxylase proenzyme (291 aa).

Catalysis depends on charge relay system; for autoendoproteolytic cleavage activity residues Asp-93, His-150, and Ser-253. The active-site Schiff-base intermediate with substrate; via pyruvic acid; for decarboxylase activity is the Ser-253. Ser-253 carries the pyruvic acid (Ser); by autocatalysis modification.

This sequence belongs to the phosphatidylserine decarboxylase family. PSD-B subfamily. Prokaryotic type I sub-subfamily. As to quaternary structure, heterodimer of a large membrane-associated beta subunit and a small pyruvoyl-containing alpha subunit. Pyruvate is required as a cofactor. Is synthesized initially as an inactive proenzyme. Formation of the active enzyme involves a self-maturation process in which the active site pyruvoyl group is generated from an internal serine residue via an autocatalytic post-translational modification. Two non-identical subunits are generated from the proenzyme in this reaction, and the pyruvate is formed at the N-terminus of the alpha chain, which is derived from the carboxyl end of the proenzyme. The autoendoproteolytic cleavage occurs by a canonical serine protease mechanism, in which the side chain hydroxyl group of the serine supplies its oxygen atom to form the C-terminus of the beta chain, while the remainder of the serine residue undergoes an oxidative deamination to produce ammonia and the pyruvoyl prosthetic group on the alpha chain. During this reaction, the Ser that is part of the protease active site of the proenzyme becomes the pyruvoyl prosthetic group, which constitutes an essential element of the active site of the mature decarboxylase.

Its subcellular location is the cell membrane. The enzyme catalyses a 1,2-diacyl-sn-glycero-3-phospho-L-serine + H(+) = a 1,2-diacyl-sn-glycero-3-phosphoethanolamine + CO2. Its pathway is phospholipid metabolism; phosphatidylethanolamine biosynthesis; phosphatidylethanolamine from CDP-diacylglycerol: step 2/2. Functionally, catalyzes the formation of phosphatidylethanolamine (PtdEtn) from phosphatidylserine (PtdSer). The chain is Phosphatidylserine decarboxylase proenzyme from Alcanivorax borkumensis (strain ATCC 700651 / DSM 11573 / NCIMB 13689 / SK2).